Consider the following 1201-residue polypeptide: Protein dduB (1201 aa).

Residues methionine 1 to serine 22 form the signal peptide. Topologically, residues glycine 23–serine 1180 are extracellular. N-linked (GlcNAc...) asparagine glycans are attached at residues asparagine 68, asparagine 122, asparagine 150, asparagine 185, asparagine 283, asparagine 348, asparagine 360, asparagine 437, asparagine 448, asparagine 518, asparagine 535, asparagine 554, asparagine 585, asparagine 631, asparagine 759, asparagine 815, asparagine 830, asparagine 844, asparagine 946, asparagine 1042, asparagine 1058, asparagine 1098, and asparagine 1108. A helical transmembrane segment spans residues serine 1181–leucine 1201.

The protein localises to the membrane. This is Protein dduB (dduB) from Dictyostelium discoideum (Social amoeba).